The sequence spans 508 residues: Phenylalanine--tRNA ligase alpha subunit (508 aa).

Residue alanine 2 is modified to N-acetylalanine. Threonine 190 is modified (phosphothreonine). 2 positions are modified to phosphoserine: serine 193 and serine 301. An N6-acetyllysine modification is found at lysine 311. L-phenylalanine contacts are provided by residues threonine 329, glutamine 372–glutamate 374, and tyrosine 412. Glutamate 414 provides a ligand contact to Mg(2+). Position 438 (phenylalanine 438) interacts with L-phenylalanine.

This sequence belongs to the class-II aminoacyl-tRNA synthetase family. Phe-tRNA synthetase alpha subunit type 2 subfamily. Heterotetramer; dimer of two heterodimers formed by FARSA and FARSB. Mg(2+) serves as cofactor.

It localises to the cytoplasm. It catalyses the reaction tRNA(Phe) + L-phenylalanine + ATP = L-phenylalanyl-tRNA(Phe) + AMP + diphosphate + H(+). The chain is Phenylalanine--tRNA ligase alpha subunit (FARSA) from Pongo abelii (Sumatran orangutan).